We begin with the raw amino-acid sequence, 119 residues long: Methylglyoxal synthase (119 aa).

The MGS-like domain occupies 1–119; sequence MRIALIAHDK…GTADLIIRQF (119 aa). Substrate contacts are provided by residues His-8, Lys-12, 34 to 37, and 54 to 55; these read TGTT and SG. The Proton donor/acceptor role is filled by Asp-60. Residue His-87 participates in substrate binding.

It belongs to the methylglyoxal synthase family.

It carries out the reaction dihydroxyacetone phosphate = methylglyoxal + phosphate. Catalyzes the formation of methylglyoxal from dihydroxyacetone phosphate. This is Methylglyoxal synthase from Clostridium botulinum (strain Alaska E43 / Type E3).